The sequence spans 115 residues: Large ribosomal subunit protein bL19 (115 aa).

The protein belongs to the bacterial ribosomal protein bL19 family.

Functionally, this protein is located at the 30S-50S ribosomal subunit interface and may play a role in the structure and function of the aminoacyl-tRNA binding site. The chain is Large ribosomal subunit protein bL19 from Finegoldia magna (strain ATCC 29328 / DSM 20472 / WAL 2508) (Peptostreptococcus magnus).